The primary structure comprises 164 residues: Photosystem II extrinsic protein V (164 aa).

Residues 1 to 27 form the signal peptide; sequence MIPNRKIQLSLFAVIIVFETLLNQVYA. Heme c contacts are provided by C64, C67, H68, and M131.

Belongs to the cytochrome c family. PsbV subfamily. As to quaternary structure, PSII is composed of 1 copy each of membrane proteins PsbA, PsbB, PsbC, PsbD, PsbE, PsbF, PsbH, PsbI, PsbJ, PsbK, PsbL, PsbM, PsbT, PsbY, PsbZ, Psb30/Ycf12, at least 3 peripheral proteins of the oxygen-evolving complex and a large number of cofactors. It forms dimeric complexes. The extrinsic subunits in red algae are PsbO (OEC33), PsbQ', cytochrome c-550 and PsbU. It depends on heme c as a cofactor.

The protein resides in the plastid. Its subcellular location is the chloroplast thylakoid membrane. In terms of biological role, one of the extrinsic, lumenal subunits of photosystem II (PSII). PSII is a light-driven water plastoquinone oxidoreductase, using light energy to abstract electrons from H(2)O, generating a proton gradient subsequently used for ATP formation. The extrinsic proteins stabilize the structure of photosystem II oxygen-evolving complex (OEC), the ion environment of oxygen evolution and protect the OEC against heat-induced inactivation. This chain is Photosystem II extrinsic protein V, found in Gracilaria tenuistipitata var. liui (Red alga).